The chain runs to 523 residues: UDP-glucuronosyltransferase 3A2 (523 aa).

The N-terminal stretch at 1–22 is a signal peptide; it reads MAGQRVLLLVGFLLPGVLLSEA. At 23–483 the chain is on the extracellular side; it reads AKILTISTVG…YVFQQPWHEQ (461 aa). Residue Asn-52 is glycosylated (N-linked (GlcNAc...) asparagine). Residues 484 to 504 traverse the membrane as a helical segment; it reads YLLDVFVFLLGLTLGTLWLCG. The Cytoplasmic portion of the chain corresponds to 505–523; sequence KLLGMAVWWLRGARKVKET.

This sequence belongs to the UDP-glycosyltransferase family.

The protein localises to the membrane. It catalyses the reaction glucuronate acceptor + UDP-alpha-D-glucuronate = acceptor beta-D-glucuronoside + UDP + H(+). Its function is as follows. UDP-glucuronosyltransferases catalyze phase II biotransformation reactions in which lipophilic substrates are conjugated with glucuronic acid to increase water solubility and enhance excretion. They are of major importance in the conjugation and subsequent elimination of potentially toxic xenobiotics and endogenous compounds. This chain is UDP-glucuronosyltransferase 3A2 (UGT3A2), found in Homo sapiens (Human).